A 525-amino-acid chain; its full sequence is Lysine--tRNA ligase (525 aa).

Residues 44–52 (PSGLPHIGT) carry the 'HIGH' region motif. A 'KMSKS' region motif is present at residues 290 to 294 (KISKS). Lys293 contributes to the ATP binding site.

Belongs to the class-I aminoacyl-tRNA synthetase family.

It is found in the cytoplasm. It catalyses the reaction tRNA(Lys) + L-lysine + ATP = L-lysyl-tRNA(Lys) + AMP + diphosphate. The chain is Lysine--tRNA ligase from Rickettsia felis (strain ATCC VR-1525 / URRWXCal2) (Rickettsia azadi).